We begin with the raw amino-acid sequence, 420 residues long: Anaerobic glycerol-3-phosphate dehydrogenase subunit B (420 aa).

This sequence belongs to the anaerobic G-3-P dehydrogenase subunit B family. As to quaternary structure, composed of a catalytic GlpA/B dimer and of membrane bound GlpC. The cofactor is FMN.

The enzyme catalyses a quinone + sn-glycerol 3-phosphate = dihydroxyacetone phosphate + a quinol. The protein operates within polyol metabolism; glycerol degradation via glycerol kinase pathway; glycerone phosphate from sn-glycerol 3-phosphate (anaerobic route): step 1/1. Its function is as follows. Conversion of glycerol 3-phosphate to dihydroxyacetone. Uses fumarate or nitrate as electron acceptor. In Pectobacterium atrosepticum (strain SCRI 1043 / ATCC BAA-672) (Erwinia carotovora subsp. atroseptica), this protein is Anaerobic glycerol-3-phosphate dehydrogenase subunit B.